The following is a 279-amino-acid chain: SERGCAFCGAKLVIGGVLKDTIQMIHGPLGCAYDTWHTKRYPTDNGHFNMKYVWSTDMKESHVVFGGEKRLEKSMHEAFDEMPDIKRMIVYTTCPTALIGDDIKAVAKKVMKDRPDVDVFTVECPGFSGVSQSKGHHVLNIGWINEKVETMEKEITSEYTMNFIGDFNIQGDTQLLQTYWDRLGIQVVAHFTGNGTYDDLRCMHQAQLNVVNCARSSGYIANELKKRYGIPRLDIDSWGFNYMAEGIRKICAFFGIEEKGEALIAEEYAKWKPKLDWYK.

Positions 5, 31, and 94 each coordinate [8Fe-7S] cluster. Position 213 (Cys-213) interacts with [7Fe-V-9S-C-homocitryl] cluster.

This sequence belongs to the NifD/NifK/NifE/NifN family. As to quaternary structure, hexamer of two alpha, two beta, and two delta chains. The cofactor is [8Fe-7S] cluster. Requires [7Fe-V-9S-C-homocitryl] cluster as cofactor.

It carries out the reaction N2 + 8 reduced [2Fe-2S]-[ferredoxin] + 16 ATP + 16 H2O = H2 + 8 oxidized [2Fe-2S]-[ferredoxin] + 2 NH4(+) + 16 ADP + 16 phosphate + 6 H(+). Its function is as follows. This vanadium-iron protein is part of the nitrogenase complex that catalyzes the key enzymatic reactions in nitrogen fixation. This is Nitrogenase vanadium-iron protein alpha chain (vnfD) from Azotobacter salinestris.